A 223-amino-acid chain; its full sequence is Serum amyloid P-component (223 aa).

The signal sequence occupies residues 1 to 19 (MNKPLLWISVLTSLLEAFA). One can recognise a Pentraxin (PTX) domain in the interval 24–223 (SGKVFVFPRE…YVIIKPLVWV (200 aa)). A glycan (N-linked (GlcNAc...) asparagine) is linked at asparagine 51. A disulfide bridge links cysteine 55 with cysteine 114. Ca(2+)-binding residues include aspartate 77, asparagine 78, glutamate 155, glutamine 156, aspartate 157, and glutamine 167.

This sequence belongs to the pentraxin family. As to quaternary structure, homopentamer. Pentraxin (or pentaxin) have a discoid arrangement of 5 non-covalently bound subunits. Ca(2+) serves as cofactor. N-glycosylated with a complex biantennary oligosaccharide chain with a sialic acid at the end (disialo-SAP). Monosialo-SAP as well as asioalo-SAP are also detected. In terms of tissue distribution, found in serum and urine.

The protein localises to the secreted. Its function is as follows. Can interact with DNA and histones and may scavenge nuclear material released from damaged circulating cells. May also function as a calcium-dependent lectin. This is Serum amyloid P-component (APCS) from Homo sapiens (Human).